The following is a 432-amino-acid chain: Sensor histidine kinase YrkQ (432 aa).

Over 1-12 (MAHLKFTLTKKL) the chain is Cytoplasmic. A helical membrane pass occupies residues 13–33 (ALLIMVAAIVSGVIFLTLQKI). The Extracellular segment spans residues 34 to 145 (TDDLIEGYLS…GFYSSRYYDL (112 aa)). A helical membrane pass occupies residues 146–166 (AFALDLLGATLIFLIIVLFGI). The 53-residue stretch at 167-219 (RQSLRYLKTIHQEIHILEGGELDYEMTIKGHDELAMIAKSIEDLRKAFLDKLK) folds into the HAMP domain. Topologically, residues 167-432 (RQSLRYLKTI…IVLRFWNTKM (266 aa)) are cytoplasmic. One can recognise a Histidine kinase domain in the interval 234-432 (EMSHDMRTPL…IVLRFWNTKM (199 aa)). Histidine 237 carries the post-translational modification Phosphohistidine; by autocatalysis.

Its subcellular location is the cell membrane. The enzyme catalyses ATP + protein L-histidine = ADP + protein N-phospho-L-histidine.. Its function is as follows. Member of the two-component regulatory system YrkQ/YrkP. Probably activates YrkP by phosphorylation. The protein is Sensor histidine kinase YrkQ (yrkQ) of Bacillus subtilis (strain 168).